The chain runs to 429 residues: C4-dicarboxylate transport protein (429 aa).

Transmembrane regions (helical) follow at residues 3–23 (LTIFKSLYFQVLTAITLGVLL), 44–64 (LIKMIIAPVIFCTVVTGIAGM), 76–96 (IALLYFEIVSTIALLIGLLIV), 142–162 (IGAFASGNILQVLLFAVLFGF), 184–204 (VIFGIINMIMRLAPLGAFGAM), 222–242 (LIACFYLTCILFVVVVLGSIA), 326–346 (VIHQVTLLVVLLLSSKGAAGV), and 352–372 (IVLAATISAVGHLPLAGLALI).

It belongs to the dicarboxylate/amino acid:cation symporter (DAACS) (TC 2.A.23) family.

It localises to the cell inner membrane. Functionally, responsible for the transport of dicarboxylates such as succinate, fumarate, and malate from the periplasm across the membrane. The protein is C4-dicarboxylate transport protein of Serratia proteamaculans (strain 568).